Consider the following 307-residue polypeptide: Nucleotide-binding protein Sca_0414 (307 aa).

ATP is bound at residue 19–26 (GMSGAGKS). 70–73 (DLRG) serves as a coordination point for GTP.

This sequence belongs to the RapZ-like family.

Displays ATPase and GTPase activities. The polypeptide is Nucleotide-binding protein Sca_0414 (Staphylococcus carnosus (strain TM300)).